The following is a 750-amino-acid chain: 3-isopropylmalate dehydratase (750 aa).

3 residues coordinate [4Fe-4S] cluster: cysteine 353, cysteine 413, and cysteine 416. A disordered region spans residues 492 to 524 (KYDGSPEVFKSTQDTTPAVKPPQPASDSSSSGG).

The protein belongs to the aconitase/IPM isomerase family. As to quaternary structure, monomer. It depends on [4Fe-4S] cluster as a cofactor.

The enzyme catalyses (2R,3S)-3-isopropylmalate = (2S)-2-isopropylmalate. The protein operates within amino-acid biosynthesis; L-leucine biosynthesis; L-leucine from 3-methyl-2-oxobutanoate: step 2/4. Functionally, catalyzes the isomerization between 2-isopropylmalate and 3-isopropylmalate, via the formation of 2-isopropylmaleate. This chain is 3-isopropylmalate dehydratase (LEU1), found in Rhizopus niveus.